We begin with the raw amino-acid sequence, 495 residues long: GTPase Der (495 aa).

Residues 3–178 (AKIALVGRPN…EMRDLLPEED (176 aa)) form the EngA-type G 1 domain. Residues 9 to 16 (GRPNVGKS), 57 to 61 (DTGGI), and 130 to 133 (NKVD) each bind GTP. The interval 190–227 (TAVASADADVDADVETEGGTSASETEEGITEETVEDEP) is disordered. The segment covering 213 to 227 (ETEEGITEETVEDEP) has biased composition (acidic residues). One can recognise an EngA-type G 2 domain in the interval 231-404 (LRLCMLGRPN…LAARIRRECS (174 aa)). GTP-binding positions include 237–244 (GRPNAGKS), 284–288 (DTAGV), and 349–352 (NKMD). Residues 405 to 489 (VRIPTGQLNR…PMRVHFRSSH (85 aa)) enclose the KH-like domain.

Belongs to the TRAFAC class TrmE-Era-EngA-EngB-Septin-like GTPase superfamily. EngA (Der) GTPase family. As to quaternary structure, associates with the 50S ribosomal subunit.

GTPase that plays an essential role in the late steps of ribosome biogenesis. The sequence is that of GTPase Der from Nitratidesulfovibrio vulgaris (strain DP4) (Desulfovibrio vulgaris).